Here is a 157-residue protein sequence, read N- to C-terminus: Protein-export protein SecB (157 aa).

It belongs to the SecB family. As to quaternary structure, homotetramer, a dimer of dimers. One homotetramer interacts with 1 SecA dimer.

It is found in the cytoplasm. Its function is as follows. One of the proteins required for the normal export of preproteins out of the cell cytoplasm. It is a molecular chaperone that binds to a subset of precursor proteins, maintaining them in a translocation-competent state. It also specifically binds to its receptor SecA. The polypeptide is Protein-export protein SecB (Tolumonas auensis (strain DSM 9187 / NBRC 110442 / TA 4)).